The following is a 717-amino-acid chain: ATP-dependent zinc metalloprotease FtsH (717 aa).

Residues 1–9 (MKNASRIFK) are Cytoplasmic-facing. Residues 10-30 (GPLIWILLCIGLIIVFLQFAG) traverse the membrane as a helical segment. Residues 31 to 111 (SGNGYKDIPT…SWQGENPGQS (81 aa)) lie on the Extracellular side of the membrane. A helical transmembrane segment spans residues 112-132 (IWKALLINFLPFVIILLFFLW). The Cytoplasmic portion of the chain corresponds to 133 to 717 (AMNAAQGMGG…NGNPWGPPRS (585 aa)). 207–214 (GPPGTGKT) is a binding site for ATP. His-429 serves as a coordination point for Zn(2+). Glu-430 is an active-site residue. Zn(2+)-binding residues include His-433 and Asp-505. A disordered region spans residues 617 to 717 (AFTGSDKRVP…NGNPWGPPRS (101 aa)). Residues 691-717 (PEPPSPTHPGEGPQPPSNGNPWGPPRS) are compositionally biased toward pro residues.

The protein in the central section; belongs to the AAA ATPase family. This sequence in the C-terminal section; belongs to the peptidase M41 family. As to quaternary structure, homohexamer. The cofactor is Zn(2+).

It localises to the cell membrane. Functionally, acts as a processive, ATP-dependent zinc metallopeptidase for both cytoplasmic and membrane proteins. Plays a role in the quality control of integral membrane proteins. In Cutibacterium acnes (strain SK137) (Propionibacterium acnes), this protein is ATP-dependent zinc metalloprotease FtsH.